A 417-amino-acid chain; its full sequence is Gamma-glutamyl phosphate reductase (417 aa).

Belongs to the gamma-glutamyl phosphate reductase family.

The protein resides in the cytoplasm. The enzyme catalyses L-glutamate 5-semialdehyde + phosphate + NADP(+) = L-glutamyl 5-phosphate + NADPH + H(+). It participates in amino-acid biosynthesis; L-proline biosynthesis; L-glutamate 5-semialdehyde from L-glutamate: step 2/2. Catalyzes the NADPH-dependent reduction of L-glutamate 5-phosphate into L-glutamate 5-semialdehyde and phosphate. The product spontaneously undergoes cyclization to form 1-pyrroline-5-carboxylate. The sequence is that of Gamma-glutamyl phosphate reductase from Bacteroides thetaiotaomicron (strain ATCC 29148 / DSM 2079 / JCM 5827 / CCUG 10774 / NCTC 10582 / VPI-5482 / E50).